The following is a 507-amino-acid chain: MATLRADEISNIIRERIEQYNREVKIVNTGTVLQVGDGIARIHGLDEVMAGELVEFEEKTVGIALNLESNNVGVVLMGDGLMIQEGSSVKATGRIAQIPVSEDYLGRVINALAKPIDGRGEISASESRLIESPAPGIISRRSVYEPMQTGLIAIDAMIPIGRGQRELIIGDRQTGKTAVATDTILNQKGQNVICVYVAIGQKASSVAQVVTTFQEQGVMEYTIVVAETADAPATLQYLAPYTGAALAEYFMYRERHTLIIYDDLSKQAQAYRQMSLLLRRPPGREAYPGDVFYLHSRLLERAAKLSSRLGEGSMTALPIVETQSGDVSAYIPTNVISITDGQIFLSADLFNSGIRPAINVGISVSRVGSAAQIKAMKQVAGKLKLELAQFAELEAFAQFASDLDKATQNQLARGQRLRELLKQSQAAPLTVEEQVVTIYTGTNGYLDSLEIGQVKKFLVQLRTYLKSSKPQFQEIISSTKTFTEEAEVLLKEAIQEQMERFLLQEQT.

ATP is bound at residue 170–177 (GDRQTGKT).

It belongs to the ATPase alpha/beta chains family. F-type ATPases have 2 components, CF(1) - the catalytic core - and CF(0) - the membrane proton channel. CF(1) has five subunits: alpha(3), beta(3), gamma(1), delta(1), epsilon(1). CF(0) has four main subunits: a, b, b' and c.

It localises to the plastid. Its subcellular location is the chloroplast thylakoid membrane. The enzyme catalyses ATP + H2O + 4 H(+)(in) = ADP + phosphate + 5 H(+)(out). In terms of biological role, produces ATP from ADP in the presence of a proton gradient across the membrane. The alpha chain is a regulatory subunit. In Ranunculus macranthus (Large buttercup), this protein is ATP synthase subunit alpha, chloroplastic.